The sequence spans 286 residues: MKLSKKYLLAVPFFVLMVIFFVVPMAWIIVSGLQNENGASITEKYQPLVGGYSFFQSFWTSLWTATVTVLVALLVAFPFCYFLSQSKNKVFRSFVIALATAPIWSSFLIKLIGLKTLLDLVLGLALNRVGDNNLTFGSGYTLIGMIYLFTPFMFLPLYNNFCILPKNLILASQDLGYNWITSFIKVVIPFSKTAILSGIALTFFPSLTSVAIAQFLDNSNQNNTLGNYVFTLGNNGYDSAIERGRASGAIIIAALITFAFYFVVIFAPRIVRLIQTKCLKYRRVNV.

The next 6 helical transmembrane spans lie at 10–30 (AVPF…WIIV), 62–82 (LWTA…FCYF), 94–114 (FVIA…LIGL), 136–156 (FGSG…MFLP), 193–213 (TAIL…VAIA), and 248–268 (GAII…IFAP). Residues 58-264 (FWTSLWTATV…LITFAFYFVV (207 aa)) enclose the ABC transmembrane type-1 domain.

It belongs to the binding-protein-dependent transport system permease family. CysTW subfamily.

The protein localises to the cell membrane. Required for the activity of the bacterial transport system of putrescine and spermidine. The polypeptide is Spermidine/putrescine transport system permease protein PotB homolog (potB) (Mycoplasma pneumoniae (strain ATCC 29342 / M129 / Subtype 1) (Mycoplasmoides pneumoniae)).